A 520-amino-acid polypeptide reads, in one-letter code: Glucose starvation modulator protein 1 (520 aa).

A DNA-binding region (zn(2)-C6 fungal-type) is located at residues 20–48 (CSFCHSKHLQCSNNRPCKNCVKRNIADQC). Disordered stretches follow at residues 63 to 104 (AKNK…SSGR) and 194 to 213 (PASP…PNEM). Residues 74–85 (SLESSSSPFSPL) show a composition bias toward low complexity. The span at 90-104 (INSQSSQPLDPSSGR) shows a compositional bias: polar residues. The PAS domain occupies 376–445 (DYEKLSHLNS…FKLFKSVAVG (70 aa)).

The protein belongs to the ERT1/acuK family.

The protein resides in the nucleus. Functionally, transcription factor which regulates nonfermentable carbon utilization. This Meyerozyma guilliermondii (strain ATCC 6260 / CBS 566 / DSM 6381 / JCM 1539 / NBRC 10279 / NRRL Y-324) (Yeast) protein is Glucose starvation modulator protein 1 (GSM1).